We begin with the raw amino-acid sequence, 290 residues long: Shikimate dehydrogenase (NADP(+)) (290 aa).

Residues 18 to 20 and Thr-66 each bind shikimate; that span reads SYS. Lys-70 functions as the Proton acceptor in the catalytic mechanism. Positions 91 and 106 each coordinate shikimate. Residues 130–134 and Met-230 contribute to the NADP(+) site; that span reads GNGGA. Tyr-232 contributes to the shikimate binding site. Gly-253 contributes to the NADP(+) binding site.

Belongs to the shikimate dehydrogenase family. In terms of assembly, homodimer.

It carries out the reaction shikimate + NADP(+) = 3-dehydroshikimate + NADPH + H(+). Its pathway is metabolic intermediate biosynthesis; chorismate biosynthesis; chorismate from D-erythrose 4-phosphate and phosphoenolpyruvate: step 4/7. Functionally, involved in the biosynthesis of the chorismate, which leads to the biosynthesis of aromatic amino acids. Catalyzes the reversible NADPH linked reduction of 3-dehydroshikimate (DHSA) to yield shikimate (SA). The sequence is that of Shikimate dehydrogenase (NADP(+)) from Prosthecochloris aestuarii (strain DSM 271 / SK 413).